The primary structure comprises 467 residues: Ribulose bisphosphate carboxylase large chain (467 aa).

At K5 the chain carries N6,N6,N6-trimethyllysine. Residues N114 and T164 each contribute to the substrate site. K166 functions as the Proton acceptor in the catalytic mechanism. Residue K168 coordinates substrate. Residues K192, D194, and E195 each contribute to the Mg(2+) site. K192 is subject to N6-carboxylysine. H285 acts as the Proton acceptor in catalysis. Substrate-binding residues include R286, H318, and S370.

It belongs to the RuBisCO large chain family. Type I subfamily. Heterohexadecamer of 8 large chains and 8 small chains; disulfide-linked. The disulfide link is formed within the large subunit homodimers. The cofactor is Mg(2+). The disulfide bond which can form in the large chain dimeric partners within the hexadecamer appears to be associated with oxidative stress and protein turnover.

The protein resides in the plastid. The protein localises to the chloroplast. The enzyme catalyses 2 (2R)-3-phosphoglycerate + 2 H(+) = D-ribulose 1,5-bisphosphate + CO2 + H2O. The catalysed reaction is D-ribulose 1,5-bisphosphate + O2 = 2-phosphoglycolate + (2R)-3-phosphoglycerate + 2 H(+). In terms of biological role, ruBisCO catalyzes two reactions: the carboxylation of D-ribulose 1,5-bisphosphate, the primary event in carbon dioxide fixation, as well as the oxidative fragmentation of the pentose substrate in the photorespiration process. Both reactions occur simultaneously and in competition at the same active site. The chain is Ribulose bisphosphate carboxylase large chain from Scutellaria bolanderi (Sierra skullcap).